The following is a 270-amino-acid chain: Thiazole synthase (270 aa).

The active-site Schiff-base intermediate with DXP is Lys112. 1-deoxy-D-xylulose 5-phosphate contacts are provided by residues Gly173, 199–200, and 221–222; these read AG and NS.

This sequence belongs to the ThiG family. Homotetramer. Forms heterodimers with either ThiH or ThiS.

It localises to the cytoplasm. It catalyses the reaction [ThiS sulfur-carrier protein]-C-terminal-Gly-aminoethanethioate + 2-iminoacetate + 1-deoxy-D-xylulose 5-phosphate = [ThiS sulfur-carrier protein]-C-terminal Gly-Gly + 2-[(2R,5Z)-2-carboxy-4-methylthiazol-5(2H)-ylidene]ethyl phosphate + 2 H2O + H(+). It functions in the pathway cofactor biosynthesis; thiamine diphosphate biosynthesis. Catalyzes the rearrangement of 1-deoxy-D-xylulose 5-phosphate (DXP) to produce the thiazole phosphate moiety of thiamine. Sulfur is provided by the thiocarboxylate moiety of the carrier protein ThiS. In vitro, sulfur can be provided by H(2)S. The sequence is that of Thiazole synthase from Pseudomonas entomophila (strain L48).